We begin with the raw amino-acid sequence, 81 residues long: Delta-actitoxin-Aeq2d (81 aa).

Positions 1 to 19 (MNRLMILVFAAVILALASA) are cleaved as a signal peptide. Residues 20–25 (DDVDIA) constitute a propeptide that is removed on maturation. Disulfide bonds link C31–C78, C33–C68, and C61–C79.

This sequence belongs to the sea anemone sodium channel inhibitory toxin family. Type I subfamily.

The protein localises to the secreted. Its subcellular location is the nematocyst. Its function is as follows. Binds specifically to voltage-gated sodium channels (Nav), thereby delaying their inactivation during signal transduction. Causes death to crabs. The sequence is that of Delta-actitoxin-Aeq2d from Actinia equina (Beadlet anemone).